Consider the following 233-residue polypeptide: Pyridoxal 5'-phosphate synthase subunit PdxT (233 aa).

61-63 (GES) provides a ligand contact to L-glutamine. Cysteine 93 acts as the Nucleophile in catalysis. L-glutamine-binding positions include arginine 127 and 163-164 (IR). Catalysis depends on charge relay system residues histidine 212 and glutamate 214.

It belongs to the glutaminase PdxT/SNO family. As to quaternary structure, in the presence of PdxS, forms a dodecamer of heterodimers. Only shows activity in the heterodimer.

It catalyses the reaction aldehydo-D-ribose 5-phosphate + D-glyceraldehyde 3-phosphate + L-glutamine = pyridoxal 5'-phosphate + L-glutamate + phosphate + 3 H2O + H(+). The enzyme catalyses L-glutamine + H2O = L-glutamate + NH4(+). Its pathway is cofactor biosynthesis; pyridoxal 5'-phosphate biosynthesis. Functionally, catalyzes the hydrolysis of glutamine to glutamate and ammonia as part of the biosynthesis of pyridoxal 5'-phosphate. The resulting ammonia molecule is channeled to the active site of PdxS. This is Pyridoxal 5'-phosphate synthase subunit PdxT from Paenarthrobacter aurescens (strain TC1).